Reading from the N-terminus, the 68-residue chain is Purkinje cell protein 4-like protein 1 (68 aa).

The segment covering 1 to 16 (MSELNTKTSPATNQAA) has biased composition (polar residues). Residues 1-45 (MSELNTKTSPATNQAAGQEEKGKAGNVKKAEEEEEIDIDLTAPET) form a disordered region. A Phosphothreonine modification is found at Thr-8. A compositionally biased stretch (basic and acidic residues) spans 18–31 (QEEKGKAGNVKKAE). The 24-residue stretch at 45-68 (TEKAALAIQGKFRRFQKRKKDPSS) folds into the IQ domain.

The protein belongs to the PCP4 family.

In Homo sapiens (Human), this protein is Purkinje cell protein 4-like protein 1 (PCP4L1).